The chain runs to 468 residues: Tyrosine-protein phosphatase YopH (468 aa).

The disordered stretch occupies residues 127–194 (ARGHVSSHSH…TVSPYGPEAR (68 aa)). The segment covering 130–140 (HVSSHSHSVLH) has biased composition (low complexity). Residues 152–461 (SHLDPRTPPL…DVLIKLAEGQ (310 aa)) enclose the Tyrosine-protein phosphatase domain. The active-site Phosphocysteine intermediate is the C403.

This sequence belongs to the protein-tyrosine phosphatase family. Non-receptor class subfamily. In terms of assembly, monomer.

The protein localises to the secreted. The catalysed reaction is O-phospho-L-tyrosyl-[protein] + H2O = L-tyrosyl-[protein] + phosphate. Its function is as follows. Essential virulence determinant. This protein is a protein tyrosine phosphatase. The essential function of YopH in Yersinia pathogenesis is host-protein dephosphorylation. It contributes to the ability of the bacteria to resist phagocytosis by peritoneal macrophages. The chain is Tyrosine-protein phosphatase YopH (yopH) from Yersinia enterocolitica.